The primary structure comprises 395 residues: Inner membrane protein YjgN (395 aa).

Residues 1 to 24 (MNNVISSKDNHNHTLVFTGKGGKY) lie on the Cytoplasmic side of the membrane. The helical transmembrane segment at 25–45 (FVICLVNFLLTCITLGIYAPW) threads the bilayer. The Periplasmic portion of the chain corresponds to 46-71 (AMVKCRRYIYTNMTLNNQPFAYKATG). A helical transmembrane segment spans residues 72–92 (GALFISVLLVFIIYIVSLSLI). The Cytoplasmic portion of the chain corresponds to 93–95 (EHG). Residues 96–116 (HPGLGFTLFGLLIAIIPFMAV) form a helical membrane-spanning segment. Over 117–146 (KGLQYQAMMTSLNGVHFGFQCSMRRAWWYM) the chain is Periplasmic. The helical transmembrane segment at 147–167 (FALPVLLMVALYIVLYIISLV) threads the bilayer. Residue Thr168 is a topological domain, cytoplasmic. The chain crosses the membrane as a helical span at residues 169–189 (IAVGGLVFSIVFLGLLAIIGI). The Periplasmic portion of the chain corresponds to 190-229 (GVINGITYSKWMTLFGNGANFGIHRFSIQVNVKTCIRGCV). The helical transmembrane segment at 230 to 250 (LAMLTLFPFAVVIGYLIAPVF) threads the bilayer. Topologically, residues 251–275 (TDMILLSMMGNAQAGGALILQYYGQ) are cytoplasmic. Residues 276-296 (IMACYFLYFLAIIVVTSYLYV) traverse the membrane as a helical segment. The Periplasmic portion of the chain corresponds to 297–327 (ALRNLFLNNLSLANDSIRFHSSVTAHGMLWR). The chain crosses the membrane as a helical span at residues 328 to 348 (LLVVFVISGVTLGLAYPWLKI). At 349–395 (WLVSWLAQNTQVQGDLDSLELTNDEKPLENSPLMWISRGIMPYFPFI) the chain is on the cytoplasmic side.

It is found in the cell inner membrane. This Salmonella typhimurium (strain LT2 / SGSC1412 / ATCC 700720) protein is Inner membrane protein YjgN (yjgN).